The chain runs to 122 residues: Large ribosomal subunit protein uL14c (122 aa).

The protein belongs to the universal ribosomal protein uL14 family. Part of the 50S ribosomal subunit.

The protein localises to the plastid. Functionally, binds to 23S rRNA. The chain is Large ribosomal subunit protein uL14c from Euglena longa (Euglenophycean alga).